The primary structure comprises 219 residues: Histone H1.11R (219 aa).

Composition is skewed to low complexity over residues 1-20 (MAET…AAKA) and 28-40 (AAGG…PAGP). Disordered stretches follow at residues 1–42 (MAET…GPSV) and 89–219 (LVSK…AKKK). The 74-residue stretch at 38 to 111 (AGPSVTELIT…GASGSFRLSK (74 aa)) folds into the H15 domain. 4 stretches are compositionally biased toward basic residues: residues 121–135 (PKKK…KAAA), 143–160 (KKPK…KAKK), 168–183 (KSVK…KKAV), and 192–219 (KAVK…AKKK).

This sequence belongs to the histone H1/H5 family.

It is found in the nucleus. The protein resides in the chromosome. Its function is as follows. Histones H1 are necessary for the condensation of nucleosome chains into higher-order structures. The sequence is that of Histone H1.11R from Gallus gallus (Chicken).